The sequence spans 199 residues: ATP-dependent Clp protease proteolytic subunit 3 (199 aa).

Residue S101 is the Nucleophile of the active site. The active site involves H126.

Belongs to the peptidase S14 family. In terms of assembly, fourteen ClpP subunits assemble into 2 heptameric rings which stack back to back to give a disk-like structure with a central cavity, resembling the structure of eukaryotic proteasomes.

The protein localises to the cytoplasm. The catalysed reaction is Hydrolysis of proteins to small peptides in the presence of ATP and magnesium. alpha-casein is the usual test substrate. In the absence of ATP, only oligopeptides shorter than five residues are hydrolyzed (such as succinyl-Leu-Tyr-|-NHMec, and Leu-Tyr-Leu-|-Tyr-Trp, in which cleavage of the -Tyr-|-Leu- and -Tyr-|-Trp bonds also occurs).. Cleaves peptides in various proteins in a process that requires ATP hydrolysis. Has a chymotrypsin-like activity. Plays a major role in the degradation of misfolded proteins. This is ATP-dependent Clp protease proteolytic subunit 3 from Synechococcus elongatus (strain ATCC 33912 / PCC 7942 / FACHB-805) (Anacystis nidulans R2).